The sequence spans 341 residues: MVVLPQPVTLDNHISLIPTYKPVPVLTSHSIPVVNLADPEAKTRIVKACEEFGFFKVVNHGVRPELMTRLEQEAIGFFGLPQSLKNRAGPPEPYGYGNKRIGPNGDVGWIEYLLLNANPQLSSPKTSAVFRQTPQIFRESVEEYMKEIKEVSYKVLEMVAEELGIEPRDTLSKMLRDEKSDSCLRLNHYPAAEEEAEKMVKVGFGEHTDPQIISVLRSNNTAGLQICVKDGSWVAVPPDHSSFFINVGDALQVMTNGRFKSVKHRVLADTRRSRISMIYFGGPPLSQKIAPLPCLVPEQDDWLYKEFTWSQYKSSAYKSKLGDYRLGLFEKQPLLNHKTLV.

The Fe2OG dioxygenase domain maps to 179–283; the sequence is KSDSCLRLNH…RISMIYFGGP (105 aa). Fe cation-binding residues include H207, D209, and H264. The active site involves R274. R274 serves as a coordination point for 2-oxoglutarate.

The protein belongs to the iron/ascorbate-dependent oxidoreductase family. GA2OX subfamily. Fe(2+) is required as a cofactor. As to expression, preferentially expressed in flowers, siliques, and upper stems. Expressed in cotyledons, at the base of the shoot apical meristem and developing leaf primordia.

It carries out the reaction gibberellin A1 + 2-oxoglutarate + O2 = gibberellin A8 + succinate + CO2. It participates in plant hormone biosynthesis; gibberellin biosynthesis. Functionally, catalyzes the 2-beta-hydroxylation of several biologically active gibberellins, leading to the homeostatic regulation of their endogenous level. Catabolism of gibberellins (GAs) plays a central role in plant development. Converts GA9/GA20 to GA51/GA29 and GA4/GA1 to GA34/GA8. The polypeptide is Gibberellin 2-beta-dioxygenase 2 (GA2OX2) (Arabidopsis thaliana (Mouse-ear cress)).